Here is a 152-residue protein sequence, read N- to C-terminus: Transcriptional regulator MraZ (152 aa).

SpoVT-AbrB domains lie at 5–52 and 81–124; these read ASAI…PIHE and AHEV…DEQS.

It belongs to the MraZ family. In terms of assembly, forms oligomers.

Its subcellular location is the cytoplasm. The protein localises to the nucleoid. The polypeptide is Transcriptional regulator MraZ (Shewanella baltica (strain OS155 / ATCC BAA-1091)).